The chain runs to 273 residues: DNA repair protein RecO (273 aa).

A disordered region spans residues 250 to 273 (NVGQNPSGKDDLNERRDVDGTGES). Positions 257–273 (GKDDLNERRDVDGTGES) are enriched in basic and acidic residues.

The protein belongs to the RecO family.

In terms of biological role, involved in DNA repair and RecF pathway recombination. The chain is DNA repair protein RecO from Desulfitobacterium hafniense (strain Y51).